Reading from the N-terminus, the 266-residue chain is Undecaprenyl-diphosphatase (266 aa).

The next 7 helical transmembrane spans lie at 41–61 (NLAF…VVLW), 80–100 (TKYV…GVFF), 107–127 (IFGS…ALLA), 140–160 (ISMK…MPGL), 180–200 (LAQF…LLDV), 213–233 (IPAL…CVAC), and 245–265 (LIYF…CTLL).

This sequence belongs to the UppP family.

It is found in the cell inner membrane. It catalyses the reaction di-trans,octa-cis-undecaprenyl diphosphate + H2O = di-trans,octa-cis-undecaprenyl phosphate + phosphate + H(+). Functionally, catalyzes the dephosphorylation of undecaprenyl diphosphate (UPP). Confers resistance to bacitracin. The chain is Undecaprenyl-diphosphatase from Parabacteroides distasonis (strain ATCC 8503 / DSM 20701 / CIP 104284 / JCM 5825 / NCTC 11152).